A 362-amino-acid polypeptide reads, in one-letter code: Talin rod domain-containing protein 1 (362 aa).

The tract at residues 1 to 27 is disordered; it reads MASGSAGKPTGEAASPAPGSAVGGASS. An N-acetylalanine modification is found at alanine 2. The span at 9–27 shows a compositional bias: low complexity; it reads PTGEAASPAPGSAVGGASS.

As to quaternary structure, may homodimerize. Interacts with F-actin. As to expression, ubiquitous.

In terms of biological role, actin-binding protein which may have an oncogenic function and regulates cell proliferation, migration and invasion in cancer cells. This chain is Talin rod domain-containing protein 1, found in Mus musculus (Mouse).